The chain runs to 384 residues: S-adenosylmethionine synthase (384 aa).

His15 provides a ligand contact to ATP. Residue Asp17 coordinates Mg(2+). Glu43 lines the K(+) pocket. L-methionine is bound by residues Glu56 and Gln99. The tract at residues 99–109 (QSPDINQGVDR) is flexible loop. Residues 164 to 166 (DAK), 230 to 231 (RF), Asp239, 245 to 246 (RK), Ala262, and Lys266 each bind ATP. Asp239 lines the L-methionine pocket. L-methionine is bound at residue Lys270.

It belongs to the AdoMet synthase family. In terms of assembly, homotetramer; dimer of dimers. Mg(2+) serves as cofactor. K(+) is required as a cofactor.

It is found in the cytoplasm. It catalyses the reaction L-methionine + ATP + H2O = S-adenosyl-L-methionine + phosphate + diphosphate. It functions in the pathway amino-acid biosynthesis; S-adenosyl-L-methionine biosynthesis; S-adenosyl-L-methionine from L-methionine: step 1/1. Catalyzes the formation of S-adenosylmethionine (AdoMet) from methionine and ATP. The overall synthetic reaction is composed of two sequential steps, AdoMet formation and the subsequent tripolyphosphate hydrolysis which occurs prior to release of AdoMet from the enzyme. This Klebsiella pneumoniae subsp. pneumoniae (strain ATCC 700721 / MGH 78578) protein is S-adenosylmethionine synthase.